We begin with the raw amino-acid sequence, 1165 residues long: Leptin receptor (1165 aa).

A signal peptide spans 1 to 21; it reads MICQKFCVVLLHWEFIYVITA. The Extracellular segment spans residues 22-839; the sequence is FNLSYPITPW…QDDIEKHQSD (818 aa). 6 N-linked (GlcNAc...) asparagine glycosylation sites follow: asparagine 23, asparagine 41, asparagine 56, asparagine 73, asparagine 81, and asparagine 98. Disulfide bonds link cysteine 37–cysteine 90, cysteine 89–cysteine 99, cysteine 131–cysteine 142, cysteine 186–cysteine 196, and cysteine 188–cysteine 193. An N-linked (GlcNAc...) asparagine glycan is attached at asparagine 187. Residues asparagine 206, asparagine 276, asparagine 347, and asparagine 397 are each glycosylated (N-linked (GlcNAc...) asparagine). The 95-residue stretch at 239-333 folds into the Fibronectin type-III 1 domain; the sequence is PPLGLHMEIT…TPRVFTTQDV (95 aa). The Ig-like domain occupies 331–429; the sequence is QDVIYFPPKI…HRYAELYVID (99 aa). 5 cysteine pairs are disulfide-bonded: cysteine 352/cysteine 412, cysteine 413/cysteine 418, cysteine 436/cysteine 447, cysteine 473/cysteine 528, and cysteine 488/cysteine 498. Positions 467–484 are leptin-binding; the sequence is HRSSLYCSDIPSIHPISE. N-linked (GlcNAc...) asparagine glycosylation is found at asparagine 516, asparagine 624, asparagine 659, asparagine 688, asparagine 697, asparagine 728, and asparagine 750. Fibronectin type-III domains lie at 539–634, 639–732, and 740–833; these read PPSS…TVVM, PMRG…LTFS, and IVQS…QDDI. Positions 622–626 match the WSXWS motif motif; it reads WSNWS. Residues 840–862 form a helical membrane-spanning segment; sequence AGLYVIVPVIISSSILLLGTLLI. Over 863–1165 the chain is Cytoplasmic; the sequence is SHQRMKKLFW…MENKMCDLTV (303 aa). A Box 1 motif motif is present at residues 871–879; sequence FWEDVPNPK. The residue at position 882 (serine 882) is a Phosphoserine. The segment at 893–898 is required for JAK2 activation; sequence ETFEHL. The segment at 898-906 is required for STAT3 phosphorylation; it reads LFIKHTASV. At tyrosine 986 the chain carries Phosphotyrosine; by JAK2. Position 1079 is a phosphotyrosine (tyrosine 1079). Tyrosine 1141 bears the Phosphotyrosine; by JAK2 mark.

Belongs to the type I cytokine receptor family. Type 2 subfamily. In terms of assembly, present as a mixture of monomers and dimers. The phosphorylated receptor binds a number of SH2 domain-containing proteins such as JAK2, STAT3, PTPN11, and SOCS3. Interaction with SOCS3 inhibits JAK/STAT signaling and MAPK cascade. In terms of processing, on ligand binding, phosphorylated on two conserved C-terminal tyrosine residues (isoform B only) by JAK2. Tyr-986 is required for complete binding and activation of PTPN11, ERK/FOS activation,for interaction with SOCS3 and SOCS3 mediated inhibition of leptin signaling. Phosphorylation on Tyr-1141 is required for STAT3 binding/activation. Phosphorylation of Tyr-1079 has a more accessory role. As to expression, isoform A is expressed in fetal liver and in hematopoietic tissues and choroid plexus. In adults highest expression in heart, liver, small intestine, prostate and ovary. Low level in lung and kidney. Isoform B is highly expressed in hypothalamus, but also in skeletal muscle. Detected in fundic and antral epithelial cells of the gastric mucosa. Isoform B and isoform A are expressed by NK cells (at protein level).

The protein resides in the cell membrane. It is found in the basolateral cell membrane. Its subcellular location is the secreted. Its function is as follows. Receptor for hormone LEP/leptin. On ligand binding, mediates LEP central and peripheral effects through the activation of different signaling pathways such as JAK2/STAT3 and MAPK cascade/FOS. In the hypothalamus, LEP acts as an appetite-regulating factor that induces a decrease in food intake and an increase in energy consumption by inducing anorexinogenic factors and suppressing orexigenic neuropeptides, also regulates bone mass and secretion of hypothalamo-pituitary-adrenal hormones. In the periphery, increases basal metabolism, influences reproductive function, regulates pancreatic beta-cell function and insulin secretion, is pro-angiogenic and affects innate and adaptive immunity. Control of energy homeostasis and melanocortin production (stimulation of POMC and full repression of AgRP transcription) is mediated by STAT3 signaling, whereas distinct signals regulate NPY and the control of fertility, growth and glucose homeostasis. Involved in the regulation of counter-regulatory response to hypoglycemia by inhibiting neurons of the parabrachial nucleus. Has a specific effect on T lymphocyte responses, differentially regulating the proliferation of naive and memory T -ells. Leptin increases Th1 and suppresses Th2 cytokine production. May transport LEP across the blood-brain barrier. Binds LEP and mediates LEP endocytosis. Does not induce phosphorylation of and activate STAT3. Functionally, antagonizes Isoform A and isoform B-mediated LEP binding and endocytosis. The chain is Leptin receptor (LEPR) from Homo sapiens (Human).